We begin with the raw amino-acid sequence, 347 residues long: Protein FAM50 homolog (347 aa).

The segment covering 77 to 113 (EDIVREREKKLAQKKEEKDREKLKALEAKQAEKDRQR) has biased composition (basic and acidic residues). The disordered stretch occupies residues 77–142 (EDIVREREKK…EDEEEPLEIK (66 aa)). A compositionally biased stretch (acidic residues) spans 123-138 (PEEDEESFDDEDEEEP).

The protein belongs to the FAM50 family.

In Aedes aegypti (Yellowfever mosquito), this protein is Protein FAM50 homolog.